The sequence spans 127 residues: Small ribosomal subunit protein uS11 (127 aa).

Belongs to the universal ribosomal protein uS11 family. In terms of assembly, part of the 30S ribosomal subunit. Interacts with proteins S7 and S18. Binds to IF-3.

Its function is as follows. Located on the platform of the 30S subunit, it bridges several disparate RNA helices of the 16S rRNA. Forms part of the Shine-Dalgarno cleft in the 70S ribosome. This Chlorobium phaeobacteroides (strain DSM 266 / SMG 266 / 2430) protein is Small ribosomal subunit protein uS11.